The primary structure comprises 125 residues: Cu-Zn superoxide dismutase-like protein (125 aa).

The cysteines at positions 52 and 102 are disulfide-linked.

The protein belongs to the Cu-Zn superoxide dismutase family.

The protein localises to the host cytoplasm. Virion protein with no enzymatic activity. This Bos taurus (Bovine) protein is Cu-Zn superoxide dismutase-like protein.